The primary structure comprises 216 residues: FMN-dependent NADH:quinone oxidoreductase (216 aa).

FMN is bound by residues Ser-10 and 15-17; that span reads SIS.

Belongs to the azoreductase type 1 family. In terms of assembly, homodimer. The cofactor is FMN.

It catalyses the reaction 2 a quinone + NADH + H(+) = 2 a 1,4-benzosemiquinone + NAD(+). The catalysed reaction is N,N-dimethyl-1,4-phenylenediamine + anthranilate + 2 NAD(+) = 2-(4-dimethylaminophenyl)diazenylbenzoate + 2 NADH + 2 H(+). Its function is as follows. Quinone reductase that provides resistance to thiol-specific stress caused by electrophilic quinones. In terms of biological role, also exhibits azoreductase activity. Catalyzes the reductive cleavage of the azo bond in aromatic azo compounds to the corresponding amines. The sequence is that of FMN-dependent NADH:quinone oxidoreductase from Nocardia farcinica (strain IFM 10152).